We begin with the raw amino-acid sequence, 80 residues long: Sulfur carrier protein TusA (80 aa).

C17 (cysteine persulfide intermediate) is an active-site residue.

This sequence belongs to the sulfur carrier protein TusA family.

The protein resides in the cytoplasm. Its function is as follows. Sulfur carrier protein which probably makes part of a sulfur-relay system. This Pseudomonas entomophila (strain L48) protein is Sulfur carrier protein TusA.